The primary structure comprises 673 residues: MAPNSVAVTMEKPDNFSLLEINGSDPSSFPDKRKSISPKQFSWFLLLKAHRLISCLSWLVSSVKKRIAFSAKNINEEEDPKSRGKQMYRFIKACLVISIIALSIEIVAHFKKWNLDLINRPSWEVYGLVEWSYMAWLSFRSDYIAPLVISLSRFCTVLFLIQSLDRLVLCLGCFWIKFKKIEPKLTEESIDLEDPSSFPMVLIQIPMCNEREVYEQSIGAASQLDWPKDRILIQVLDDSDDPNLQLLIKEEVSVWAEKGVNIIYRHRLIRTGYKAGNLKSAMTCDYVKDYEFVTIFDADFTPNPDFLKKTVPHFKGNPELGLVQARWSFVNKDENLLTRLQNINLCFHFEVEQQVNGVFLNFFGFNGTAGVWRIKALEESGGWLERTTVEDMDIAVRAHLNGWKFIYLNDVEVTCELPESYEAYKKQQHRWHSGPMQLFRLCLPSIIKSKISVWKKANLIFLFFLLRKLILPFYSFTLFCIILPLTMFIPEAELPLWIICYVPIFISLLNILPSPKSFPFLVPYLLFENTMSITKFNAMISGLFQFGSAYEWVVTKKTGRSSESDLLAFAEKEEKLHRRNSESGLELLSKLKEQETNLVGQETVKKSLGGLMRPKNKKKTNMVFKKELGLAFLLLTAAARSFLSAHGLHFYFLLFQGLSFLVVGLDLIGEQIS.

2 consecutive transmembrane segments (helical) span residues 90–110 (FIKA…VAHF) and 144–164 (IAPL…IQSL). Residue Asp-238 is part of the active site. The substrate site is built by Asp-297 and Asp-299. Asp-391 is an active-site residue. A run of 2 helical transmembrane segments spans residues 469–489 (LILP…TMFI) and 494–514 (LPLW…ILPS). The residue at position 581 (Ser-581) is a Phosphoserine. Transmembrane regions (helical) follow at residues 623-643 (VFKK…RSFL) and 648-668 (LHFY…LDLI).

The protein belongs to the glycosyltransferase 2 family. Plant cellulose synthase-like C subfamily. As to quaternary structure, homodimer. Interacts with XXT5. Interacts with FUT1, MUR3 and XLT2. As to expression, expressed in seedlings, roots, leaves, stems, flowers and seeds.

The protein localises to the golgi apparatus membrane. Beta-1,4-glucan synthase rather involved in the synthesis of the xyloglucan backbone than cellulose. Seems to work simultaneously with xyloglucan 6-xylosyltransferase. Xyloglucan is a noncellulosic polysaccharides of plant cell wall and consists of a glucan backbone substituted by xylose, galactose and fucose. Associates with other xyloglucan-synthesizing enzymes to form multiprotein complexes for xyloglucan synthesis in the Golgi. The protein is Xyloglucan glycosyltransferase 4 of Arabidopsis thaliana (Mouse-ear cress).